We begin with the raw amino-acid sequence, 551 residues long: Palmdelphin (551 aa).

Position 1 is an N-acetylmethionine (Met-1). Residues 12-106 (QAITDKRKIQ…LQISANEEAI (95 aa)) adopt a coiled-coil conformation. A Glycyl lysine isopeptide (Lys-Gly) (interchain with G-Cter in SUMO2) cross-link involves residue Lys-125. The residue at position 135 (Ser-135) is a Phosphoserine. A Glycyl lysine isopeptide (Lys-Gly) (interchain with G-Cter in SUMO1); alternate cross-link involves residue Lys-178. A Glycyl lysine isopeptide (Lys-Gly) (interchain with G-Cter in SUMO2); alternate cross-link involves residue Lys-178. Basic and acidic residues predominate over residues 247–258 (ERNSKSPTEYHE). The interval 247–266 (ERNSKSPTEYHEPVYANPFC) is disordered. Thr-270 is modified (phosphothreonine). 2 disordered regions span residues 294-390 (LGNH…TCQE) and 451-533 (AEDN…GTED). Residues Ser-321 and Ser-349 each carry the phosphoserine modification. The segment covering 341–353 (HTQQKRMASPWEE) has biased composition (polar residues). Residues 354–365 (SSNRQNEHEVSP) show a composition bias toward basic and acidic residues. Residues Ser-370, Ser-375, Ser-384, Ser-385, Ser-498, Ser-515, and Ser-520 each carry the phosphoserine modification.

The protein belongs to the paralemmin family. As to quaternary structure, interacts with GLUL. Post-translationally, phosphorylated. Ubiquitous. Expressed at highest levels in the heart and lung.

It localises to the cytoplasm. The protein localises to the cell projection. Its subcellular location is the dendrite. The protein resides in the dendritic spine. The polypeptide is Palmdelphin (Palmd) (Mus musculus (Mouse)).